A 511-amino-acid polypeptide reads, in one-letter code: Cobyric acid synthase (511 aa).

A GATase cobBQ-type domain is found at L251–F443. The active-site Nucleophile is C332. The active site involves H435.

This sequence belongs to the CobB/CobQ family. CobQ subfamily.

It participates in cofactor biosynthesis; adenosylcobalamin biosynthesis. Catalyzes amidations at positions B, D, E, and G on adenosylcobyrinic A,C-diamide. NH(2) groups are provided by glutamine, and one molecule of ATP is hydrogenolyzed for each amidation. The sequence is that of Cobyric acid synthase from Listeria welshimeri serovar 6b (strain ATCC 35897 / DSM 20650 / CCUG 15529 / CIP 8149 / NCTC 11857 / SLCC 5334 / V8).